Reading from the N-terminus, the 474-residue chain is Alpha-galactosidase (474 aa).

The first 22 residues, M1–P22, serve as a signal peptide directing secretion. 2 disulfide bridges follow: C43–C75 and C122–C152. N44 carries an N-linked (GlcNAc...) asparagine glycan. 3 residues coordinate substrate: D73, D74, and K148. D150 serves as the catalytic Nucleophile. The N-linked (GlcNAc...) asparagine glycan is linked to N176. A substrate-binding site is contributed by R206. The active-site Proton donor is the D210. 2 disulfide bridges follow: C222/C238 and C224/C231. Q252 provides a ligand contact to substrate. 5 N-linked (GlcNAc...) asparagine glycosylation sites follow: N271, N414, N423, N436, and N455.

This sequence belongs to the glycosyl hydrolase 27 family. As to quaternary structure, homotetramer.

The protein resides in the secreted. The enzyme catalyses Hydrolysis of terminal, non-reducing alpha-D-galactose residues in alpha-D-galactosides, including galactose oligosaccharides, galactomannans and galactolipids.. In Torulaspora delbrueckii (Yeast), this protein is Alpha-galactosidase (MEL).